Reading from the N-terminus, the 184-residue chain is UPF0301 protein RSKD131_2391 (184 aa).

This sequence belongs to the UPF0301 (AlgH) family.

This Cereibacter sphaeroides (strain KD131 / KCTC 12085) (Rhodobacter sphaeroides) protein is UPF0301 protein RSKD131_2391.